We begin with the raw amino-acid sequence, 31 residues long: Cytochrome b6-f complex subunit 6 (31 aa).

Residues 3-23 (TIISYFGFLLASIIFTLILFI) traverse the membrane as a helical segment.

The protein belongs to the PetL family. In terms of assembly, the 4 large subunits of the cytochrome b6-f complex are cytochrome b6, subunit IV (17 kDa polypeptide, PetD), cytochrome f and the Rieske protein, while the 4 small subunits are PetG, PetL, PetM and PetN. The complex functions as a dimer.

It is found in the plastid. The protein resides in the chloroplast thylakoid membrane. Its function is as follows. Component of the cytochrome b6-f complex, which mediates electron transfer between photosystem II (PSII) and photosystem I (PSI), cyclic electron flow around PSI, and state transitions. PetL is important for photoautotrophic growth as well as for electron transfer efficiency and stability of the cytochrome b6-f complex. In Abies homolepis (Nikko fir), this protein is Cytochrome b6-f complex subunit 6.